Consider the following 156-residue polypeptide: Lipoprotein signal peptidase (156 aa).

The next 2 membrane-spanning stretches (helical) occupy residues 52-72 (ILEG…IGIV) and 85-105 (FATA…DRIF). Residues Asp111 and Asp129 contribute to the active site. The chain crosses the membrane as a helical span at residues 121-141 (NFPIFNVADSALCVGVGILFL).

The protein belongs to the peptidase A8 family.

The protein resides in the cell membrane. It catalyses the reaction Release of signal peptides from bacterial membrane prolipoproteins. Hydrolyzes -Xaa-Yaa-Zaa-|-(S,diacylglyceryl)Cys-, in which Xaa is hydrophobic (preferably Leu), and Yaa (Ala or Ser) and Zaa (Gly or Ala) have small, neutral side chains.. It functions in the pathway protein modification; lipoprotein biosynthesis (signal peptide cleavage). This protein specifically catalyzes the removal of signal peptides from prolipoproteins. This chain is Lipoprotein signal peptidase, found in Halalkalibacterium halodurans (strain ATCC BAA-125 / DSM 18197 / FERM 7344 / JCM 9153 / C-125) (Bacillus halodurans).